The sequence spans 205 residues: Probable thymidylate kinase (205 aa).

9–16 provides a ligand contact to ATP; that stretch reads GIDGVGKS.

Belongs to the thymidylate kinase family.

The catalysed reaction is dTMP + ATP = dTDP + ADP. The sequence is that of Probable thymidylate kinase from Caldivirga maquilingensis (strain ATCC 700844 / DSM 13496 / JCM 10307 / IC-167).